Reading from the N-terminus, the 1203-residue chain is DNA-directed RNA polymerase subunit beta (1203 aa).

The span at 1174-1195 (AAQEAKAAFEAEEAEKATKAEA) shows a compositional bias: basic and acidic residues. Residues 1174-1203 (AAQEAKAAFEAEEAEKATKAEATEEAAEQE) are disordered.

The protein belongs to the RNA polymerase beta chain family. The RNAP catalytic core consists of 2 alpha, 1 beta, 1 beta' and 1 omega subunit. When a sigma factor is associated with the core the holoenzyme is formed, which can initiate transcription.

The enzyme catalyses RNA(n) + a ribonucleoside 5'-triphosphate = RNA(n+1) + diphosphate. DNA-dependent RNA polymerase catalyzes the transcription of DNA into RNA using the four ribonucleoside triphosphates as substrates. This Streptococcus pneumoniae serotype 19F (strain G54) protein is DNA-directed RNA polymerase subunit beta.